The primary structure comprises 185 residues: Neuronal vesicle trafficking-associated protein 1 (185 aa).

At 1–82 the chain is on the cytoplasmic side; it reads MVKLGNNFAE…ITEGVTERFK (82 aa). Residues 83–103 traverse the membrane as a helical; Signal-anchor for type II membrane protein segment; sequence VSVLVLFALAFLTCVVFLVVY. The Lumenal portion of the chain corresponds to 104–185; sequence KVYKYDRACP…QETEAAEKSA (82 aa). Positions 129 to 164 are required for GRIP1 interaction; that stretch reads ESYYTEQDSSAREKFYTVINHYNVAKQSITRSVSPW.

The protein belongs to the NSG family. In terms of assembly, forms a complex with GRIP1, GRIA2 and STX12 through direct interaction with GRIP1; controls the intracellular fate of AMPAR and the endosomal sorting of the GRIA2 subunit toward recycling and membrane targeting. Interacts with STX12. Interacts with APP; could regulate APP processing. Interacts with FAM171A1. Pituitary and less in adrenal gland and testis. Expressed in the hippocampus throughout development. At P0, highly and broadly expressed throughout the cortical plate, but is down-regulated overall at P8 and P14, but remains relatively enriched in layer V. At P0 is expressed ubiquitously in the developing cerebellum namely Purkinje neurons as well as granule neurons. However, it becomes restricted to Purkinje cells by P8. This exclusive expression in Purkinje cells is maintained throughout adulthood.

Its subcellular location is the membrane. The protein resides in the golgi apparatus. It localises to the trans-Golgi network membrane. It is found in the endosome membrane. The protein localises to the cell projection. Its subcellular location is the dendrite. The protein resides in the early endosome membrane. It localises to the late endosome membrane. It is found in the lysosome lumen. The protein localises to the recycling endosome membrane. Its subcellular location is the cytoplasmic vesicle membrane. The protein resides in the golgi stack membrane. It localises to the endosome. It is found in the multivesicular body membrane. The protein localises to the endoplasmic reticulum membrane. Its function is as follows. Plays a role in the recycling mechanism in neurons of multiple receptors, including AMPAR, APP and L1CAM and acts at the level of early endosomes to promote sorting of receptors toward a recycling pathway. Regulates sorting and recycling of GRIA2 through interaction with GRIP1 and then contributes to the regulation of synaptic transmission and plasticity by affecting the recycling and targeting of AMPA receptors to the synapse. Is required for faithful sorting of L1CAM to axons by facilitating trafficking from somatodendritic early endosome or the recycling endosome. In an other hand, induces apoptosis via the activation of CASP3 in response to DNA damage. This Mus musculus (Mouse) protein is Neuronal vesicle trafficking-associated protein 1.